The chain runs to 633 residues: Glutamyl-tRNA(Gln) amidotransferase subunit E (633 aa).

This sequence belongs to the GatB/GatE family. GatE subfamily. In terms of assembly, heterodimer of GatD and GatE.

It carries out the reaction L-glutamyl-tRNA(Gln) + L-glutamine + ATP + H2O = L-glutaminyl-tRNA(Gln) + L-glutamate + ADP + phosphate + H(+). Functionally, allows the formation of correctly charged Gln-tRNA(Gln) through the transamidation of misacylated Glu-tRNA(Gln) in organisms which lack glutaminyl-tRNA synthetase. The reaction takes place in the presence of glutamine and ATP through an activated gamma-phospho-Glu-tRNA(Gln). The GatDE system is specific for glutamate and does not act on aspartate. The polypeptide is Glutamyl-tRNA(Gln) amidotransferase subunit E (Saccharolobus islandicus (strain L.S.2.15 / Lassen #1) (Sulfolobus islandicus)).